Here is a 562-residue protein sequence, read N- to C-terminus: Probable tRNA (uracil-O(2)-)-methyltransferase (562 aa).

The segment at 520 to 546 (VSRRQQTNPKKQEATNRPKQPCWMSLN) is disordered. Residues 535 to 562 (NRPKQPCWMSLNHPDGCPLGPESCRYLH) form a C3H1-type zinc finger.

This sequence belongs to the TRM44 family.

The protein resides in the cytoplasm. It carries out the reaction uridine(44) in tRNA(Ser) + S-adenosyl-L-methionine = 2'-O-methyluridine(44) in tRNA(Ser) + S-adenosyl-L-homocysteine + H(+). Probable adenosyl-L-methionine (AdoMet)-dependent tRNA (uracil-O(2)-)-methyltransferase. In Caenorhabditis briggsae, this protein is Probable tRNA (uracil-O(2)-)-methyltransferase.